A 156-amino-acid chain; its full sequence is Succinate dehydrogenase assembly factor 2-B, mitochondrial (156 aa).

The N-terminal 24 residues, 1–24 (MLRQFIISTVGRRQPLLMILQSRL), are a transit peptide targeting the mitochondrion.

Belongs to the SDHAF2 family. In terms of assembly, interacts with the flavoprotein subunit within the SDH catalytic dimer.

The protein localises to the mitochondrion matrix. In terms of biological role, plays an essential role in the assembly of succinate dehydrogenase (SDH), an enzyme complex (also referred to as respiratory complex II) that is a component of both the tricarboxylic acid (TCA) cycle and the mitochondrial electron transport chain, and which couples the oxidation of succinate to fumarate with the reduction of ubiquinone (coenzyme Q) to ubiquinol. Required for flavinylation (covalent attachment of FAD) of the flavoprotein subunit of the SDH catalytic dimer. The protein is Succinate dehydrogenase assembly factor 2-B, mitochondrial of Drosophila yakuba (Fruit fly).